Consider the following 184-residue polypeptide: Elongation factor P (184 aa).

Belongs to the elongation factor P family.

The protein resides in the cytoplasm. It functions in the pathway protein biosynthesis; polypeptide chain elongation. In terms of biological role, involved in peptide bond synthesis. Stimulates efficient translation and peptide-bond synthesis on native or reconstituted 70S ribosomes in vitro. Probably functions indirectly by altering the affinity of the ribosome for aminoacyl-tRNA, thus increasing their reactivity as acceptors for peptidyl transferase. The chain is Elongation factor P from Verminephrobacter eiseniae (strain EF01-2).